The following is a 231-amino-acid chain: Octanoyl-[acyl-carrier-protein]:protein N-octanoyltransferase LIPT2, mitochondrial (231 aa).

The BPL/LPL catalytic domain occupies 41 to 224; that stretch reads GTKAGVLLVC…AFKETFKCTL (184 aa). At lysine 43 the chain carries N6-succinyllysine. Residues 85 to 92, 154 to 156, and 167 to 169 each bind substrate; these read RGGLATFH, AIG, and GLA. Residue cysteine 185 is the Acyl-thioester intermediate of the active site.

Belongs to the LipB family.

The protein resides in the mitochondrion. The catalysed reaction is octanoyl-[ACP] + L-lysyl-[protein] = N(6)-octanoyl-L-lysyl-[protein] + holo-[ACP] + H(+). The protein operates within protein modification; protein lipoylation via endogenous pathway; protein N(6)-(lipoyl)lysine from octanoyl-[acyl-carrier-protein]: step 1/2. Its function is as follows. Catalyzes the transfer of endogenously produced octanoic acid from octanoyl-acyl-carrier-protein onto the lipoyl domains of lipoate-dependent enzymes such as the protein H of the glycine cleavage system (GCSH). Lipoyl-ACP can also act as a substrate although octanoyl-ACP is likely to be the physiological substrate. This chain is Octanoyl-[acyl-carrier-protein]:protein N-octanoyltransferase LIPT2, mitochondrial, found in Mus musculus (Mouse).